The following is a 318-amino-acid chain: NADH-ubiquinone oxidoreductase chain 1 (318 aa).

Helical transmembrane passes span 3 to 23 (LINLLAMIVPVLLAVAFLTLL), 69 to 89 (MLFIIAPTLALTLALTMWTPL), 102 to 122 (MLFILALSSLAVYTIMWSGWA), 144 to 164 (VTLAIIILSLLLMNGSFTLLS), 171 to 191 (YIWLLIPSWPLAMMWFISTLA), 222 to 242 (LFFLAEYANIIMMNALTIILF), 253 to 273 (ELYTINFTIKTLLFTAFFLWI), and 294 to 314 (LPLTLVMCMWHVALPIMLAGI).

Belongs to the complex I subunit 1 family. As to quaternary structure, core subunit of respiratory chain NADH dehydrogenase (Complex I) which is composed of 45 different subunits.

It localises to the mitochondrion inner membrane. The catalysed reaction is a ubiquinone + NADH + 5 H(+)(in) = a ubiquinol + NAD(+) + 4 H(+)(out). In terms of biological role, core subunit of the mitochondrial membrane respiratory chain NADH dehydrogenase (Complex I) which catalyzes electron transfer from NADH through the respiratory chain, using ubiquinone as an electron acceptor. Essential for the catalytic activity and assembly of complex I. The protein is NADH-ubiquinone oxidoreductase chain 1 (MT-ND1) of Murina suilla (Brown tube-nosed bat).